The chain runs to 397 residues: Alpha-lytic protease (397 aa).

The N-terminal stretch at 1 to 24 is a signal peptide; sequence MYVSNHRSRRVARVSVSCLVAALA. The propeptide occupies 25-199; that stretch reads AMSCGAALAA…ESSPGKLQTT (175 aa). Residues Cys216 and Cys236 are joined by a disulfide bond. Active-site charge relay system residues include His235 and Asp262. 2 disulfides stabilise this stretch: Cys300–Cys310 and Cys336–Cys369. Ser342 serves as the catalytic Charge relay system.

This sequence belongs to the peptidase S1 family.

It catalyses the reaction Preferential cleavage: Ala-|-Xaa, Val-|-Xaa in bacterial cell walls, elastin and other proteins.. This Lysobacter enzymogenes protein is Alpha-lytic protease (alpha-LP).